Reading from the N-terminus, the 241-residue chain is Proteasome subunit alpha type-5 (241 aa).

The protein belongs to the peptidase T1A family. The 26S proteasome consists of a 20S proteasome core and two 19S regulatory subunits. The 20S proteasome core is composed of 28 subunits that are arranged in four stacked rings, resulting in a barrel-shaped structure. The two end rings are each formed by seven alpha subunits, and the two central rings are each formed by seven beta subunits. The catalytic chamber with the active sites is on the inside of the barrel.

The protein localises to the cytoplasm. It localises to the nucleus. The proteasome is a multicatalytic proteinase complex which is characterized by its ability to cleave peptides with Arg, Phe, Tyr, Leu, and Glu adjacent to the leaving group at neutral or slightly basic pH. The proteasome has an ATP-dependent proteolytic activity. The sequence is that of Proteasome subunit alpha type-5 (psmA5) from Dictyostelium discoideum (Social amoeba).